The chain runs to 76 residues: MAAEHNPNADIEALSYEEAREQLVAVVGKLEAGGASLEDSLALWERGEALARRCEEWLEGARKRLAAARNQAGPES.

It belongs to the XseB family. As to quaternary structure, heterooligomer composed of large and small subunits.

It localises to the cytoplasm. It catalyses the reaction Exonucleolytic cleavage in either 5'- to 3'- or 3'- to 5'-direction to yield nucleoside 5'-phosphates.. Its function is as follows. Bidirectionally degrades single-stranded DNA into large acid-insoluble oligonucleotides, which are then degraded further into small acid-soluble oligonucleotides. This Arthrobacter sp. (strain FB24) protein is Exodeoxyribonuclease 7 small subunit.